Consider the following 213-residue polypeptide: MIELNVTFDYEQMPMHFILQVAKAQRVAVVGESGAGKSTLLNLIAGFDLATSGQILLNEVDYTFAEVADRPVSMLFQENNVFPHLTVEQNIGLALVPRLHLTPQQQQAVKKIAGQMGIAELLLRRADQLSGGQKQRVALARTLLQDKPILLLDEPFSALDPIRRNELQQLVLEICRQRQLTLLMVTHQFSESEALFDRVIHIEQGRIVADQLL.

Positions 1 to 212 (MIELNVTFDY…EQGRIVADQL (212 aa)) constitute an ABC transporter domain. ATP is bound at residue 31 to 38 (GESGAGKS).

The protein belongs to the ABC transporter superfamily. Thiamine importer (TC 3.A.1.19.1) family. As to quaternary structure, the complex is composed of two ATP-binding proteins (ThiQ), two transmembrane proteins (ThiP) and a solute-binding protein (ThiB).

Its subcellular location is the cell inner membrane. It carries out the reaction thiamine(out) + ATP + H2O = thiamine(in) + ADP + phosphate + H(+). Its function is as follows. Part of the ABC transporter complex ThiBPQ involved in thiamine import. Responsible for energy coupling to the transport system. In Haemophilus ducreyi (strain 35000HP / ATCC 700724), this protein is Thiamine import ATP-binding protein ThiQ.